A 260-amino-acid polypeptide reads, in one-letter code: Cell division protein FtsQ (260 aa).

Topologically, residues Met-1–Ser-26 are cytoplasmic. A helical membrane pass occupies residues Phe-27–Trp-47. Residues Asp-48–Asp-260 lie on the Periplasmic side of the membrane. Residues Leu-52–Tyr-122 enclose the POTRA domain.

This sequence belongs to the FtsQ/DivIB family. FtsQ subfamily. In terms of assembly, part of a complex composed of FtsB, FtsL and FtsQ.

It localises to the cell inner membrane. In terms of biological role, essential cell division protein. May link together the upstream cell division proteins, which are predominantly cytoplasmic, with the downstream cell division proteins, which are predominantly periplasmic. May control correct divisome assembly. The sequence is that of Cell division protein FtsQ from Vibrio cholerae serotype O1 (strain ATCC 39315 / El Tor Inaba N16961).